Consider the following 74-residue polypeptide: Mucroporin (74 aa).

Residues 1–22 form the signal peptide; sequence MKVKFLLAVFLIVLVVTDHCHA. The residue at position 39 (Lys-39) is a Lysine amide. The propeptide occupies 45 to 74; sequence QMEARFEPQNRNYRKRELDLEKLFANMPDY.

The protein belongs to the non-disulfide-bridged peptide (NDBP) superfamily. Short antimicrobial peptide (group 4) family. In terms of tissue distribution, expressed by the venom gland.

It localises to the secreted. The protein localises to the target cell membrane. Functionally, mucroporin: cationic host defense peptide that have antibacterial activity by breaking membranes. Is more effective on Gram-positive than on Gram-negative bacteria. Minimum inhibitory concentrations (MIC) are the following: MIC=&gt;100 ug/ml against E.coli AB94012, MIC=&gt;100 ug/ml against P.aeruginosa AB93066, MIC=25 ug/ml against B.thuringiensis AB92037, MIC=50 ug/ml against B.subtilis AB91021, MIC=25 ug/ml against S.aureus AB94004, and MIC=25 ug/ml against the methicillin-resistant coagulase-negative Staphylococcus. Its synthetic analog mucroporin-M1 is more effective. Does not show antiviral activity against any of measles, SARS-CoV, influenza H5N1, hepatitis B and HIV-1 viruses. Mutant mucroporin-M1: can inhibit Gram-positive bacteria at low concentrations and antibiotic-resistant pathogens. Minimum inhibitory concentrations (MIC) are the following: MIC=12.5 ug/ml against E.coli AB94012, MIC=100 ug/ml against P.aeruginosa AB93066, MIC=25 ug/ml against B.thuringiensis AB92037, MIC=25 ug/ml against B.subtilis AB91021, MIC=5 ug/ml against S.aureus AB94004, and MIC=5 ug/ml against the methicillin-resistant coagulase-negative Staphylococcus. Also shows antiviral activities against measles (EC(50) of 7.15 ug/ml), SARS-CoV (EC(50) of 14.46 ug/ml), influenza H5N1 viruses (EC(50) of 2.10 mug/ml), HIV-1, and hepatitis B virus. The sequence is that of Mucroporin from Lychas mucronatus (Chinese swimming scorpion).